The sequence spans 414 residues: Transmembrane protein 184A (414 aa).

A disordered region spans residues 1–32 (MTDTPGLLGTPLAWTPPARPAGPQMERAGNGS). 7 helical membrane-spanning segments follow: residues 48-68 (VSGVFVWAALVLTGHQIYLHL), 83-103 (LLFIVPVYAFDSWLSLLLLGG), 120-140 (FVIYSFLSLCFQYLGGESAIM), 177-197 (LQFCIVKPIMALVTIVLQAFG), 211-231 (LYITLVYNASVSLALYALFLF), 248-268 (FLTIKAVIFLSFWQGLLLAIL), and 290-310 (VAAGYQNFIICIEMLFASIAL). Disordered regions lie at residues 323 to 342 (TESSPAPSAPMQSISSGLKE) and 364 to 414 (YTQQ…AEEL). Residues 379 to 388 (SVPSPRTPTH) show a composition bias toward polar residues.

It belongs to the TMEM184 family. Expressed in vascular cells (at protein level).

It localises to the cell membrane. The protein resides in the cytoplasm. The protein localises to the perinuclear region. Its subcellular location is the cytoplasmic vesicle membrane. It is found in the early endosome membrane. It localises to the endosome. The protein resides in the cytoplasmic vesicle. The protein localises to the secretory vesicle membrane. Its function is as follows. Acts as a heparin receptor in vascular cells. May be involved in vesicle transport in exocrine cells and Sertoli cells. The chain is Transmembrane protein 184A (TMEM184A) from Bos taurus (Bovine).